The sequence spans 488 residues: UDP-N-acetylmuramoyl-L-alanyl-D-glutamate--2,6-diaminopimelate ligase (488 aa).

UDP-N-acetyl-alpha-D-muramoyl-L-alanyl-D-glutamate is bound by residues L24, S26, and 41–43; that span reads HQV. 113–119 contributes to the ATP binding site; the sequence is GTNGKTT. UDP-N-acetyl-alpha-D-muramoyl-L-alanyl-D-glutamate-binding positions include N154, 155–156, S182, Q188, and R190; that span reads TT. K222 bears the N6-carboxylysine mark. Meso-2,6-diaminopimelate is bound by residues R386, 410–413, G461, and E465; that span reads DNPR. Residues 410–413 carry the Meso-diaminopimelate recognition motif motif; the sequence is DNPR.

This sequence belongs to the MurCDEF family. MurE subfamily. It depends on Mg(2+) as a cofactor. In terms of processing, carboxylation is probably crucial for Mg(2+) binding and, consequently, for the gamma-phosphate positioning of ATP.

It is found in the cytoplasm. The catalysed reaction is UDP-N-acetyl-alpha-D-muramoyl-L-alanyl-D-glutamate + meso-2,6-diaminopimelate + ATP = UDP-N-acetyl-alpha-D-muramoyl-L-alanyl-gamma-D-glutamyl-meso-2,6-diaminopimelate + ADP + phosphate + H(+). The protein operates within cell wall biogenesis; peptidoglycan biosynthesis. In terms of biological role, catalyzes the addition of meso-diaminopimelic acid to the nucleotide precursor UDP-N-acetylmuramoyl-L-alanyl-D-glutamate (UMAG) in the biosynthesis of bacterial cell-wall peptidoglycan. The chain is UDP-N-acetylmuramoyl-L-alanyl-D-glutamate--2,6-diaminopimelate ligase from Haemophilus influenzae (strain PittEE).